The chain runs to 875 residues: Probable inorganic carbon transporter subunit DabA (875 aa).

Residues cysteine 380, aspartate 382, histidine 563, and cysteine 578 each contribute to the Zn(2+) site.

Belongs to the inorganic carbon transporter (TC 9.A.2) DabA family. In terms of assembly, forms a complex with DabB. The cofactor is Zn(2+).

It is found in the cell membrane. Functionally, part of an energy-coupled inorganic carbon pump. The polypeptide is Probable inorganic carbon transporter subunit DabA (Geobacillus thermodenitrificans (strain NG80-2)).